The following is a 476-amino-acid chain: Flavin-dependent halogenase otaD (476 aa).

Residues Gly-14 and Gly-17 each coordinate FAD. Positions 304 and 305 each coordinate chloride. Residue Val-306 coordinates FAD.

Belongs to the flavin-dependent halogenase family.

The enzyme catalyses ochratoxin B + FADH2 + chloride + O2 = ochratoxin A + FAD + 2 H2O. Its pathway is mycotoxin biosynthesis. In terms of biological role, flavin-dependent halogenase; part of the gene cluster that mediates the biosynthesis of ochratoxin A (OTA), a mycotoxin composed of a chlorinated type I polyketide dihydroisocoumarin moiety linked to L-phenylalanine, and demonstrated to have nephrotoxic, immunotoxic, genotoxic, neurotoxic, and teratogenic properties. OtaD chlorinates ochratoxin B (OTB) at the C-5 position to form OTA. The pathway begins with the highly reducing polyketide synthase otaA that catalyzes the formation of the isocoumarin group during the initial stages of biosynthesis, starting from one acetate and 4 malonate units, to originate the characteristic pentaketide skeleton 7-methylmellein (7-MM) of the OTA molecule. The newly identified cyclase otaY might be involved in the polyketide cyclization reaction during the initial steps of the OTA biosynthesis. 7-MM is then oxidized into 7-carboxymellein (also called ochratoxin beta) by the cytochrome P450 monooxygenase otaC. The NRPS encoded by the otaB gene is involved in the linking of phenylalanine to the dihydroisocoumarin ring. The reaction catalyzed by NRPS results in the production of ochratoxin B (OTB), which is the non-chlorinated analog of OTA and which subsequently serves as the substrate of the halogenase otaD for chlorination activity to form the final molecular structure of OTA, containing a chlorine atom in the C-5 position of the molecule. This Aspergillus niger (strain ATCC MYA-4892 / CBS 513.88 / FGSC A1513) protein is Flavin-dependent halogenase otaD.